Consider the following 343-residue polypeptide: MRIGVLTGGGDCPGLNAVIRAVVRTCHARYGSSVVGFQNGFRGLLENRRVQLHNDDRNDRLLAKGGTMLGTARVHPDKLRAGLPQIMQTLDDNGIDVLIPIGGEGTLTAASWLSEENVPVVGVPKTIDNDIDCTDVTFGHDTALTVATEAIDRLHSTAESHERVMLVEVMGRHAGWIALNAGLASGAHMTLIPEQPFDIEEVCRLVKGRFQRGDSHFICVVAEGAKPAPGTIMLREGGLDEFGHERFTGVAAQLAVEVEKRINKDVRVTVLGHIQRGGTPTAYDRVLATRFGVNAADAAHAGEYGQMVTLRGQDIGRVPLADAVRKLKLVPQSRYDDAAAFFG.

Residues Gly10, 73 to 74, and 103 to 106 each bind ATP; these read RV and GEGT. Glu104 is a binding site for Mg(2+). Residues 126-128, Arg163, 170-172, Glu223, Arg267, and 273-276 contribute to the substrate site; these read TID, MGR, and HIQR. The Proton acceptor role is filled by Asp128.

It belongs to the phosphofructokinase type A (PFKA) family. Mixed-substrate PFK group III subfamily. In terms of assembly, homodimer or homotetramer. Requires Mg(2+) as cofactor.

It is found in the cytoplasm. The catalysed reaction is beta-D-fructose 6-phosphate + ATP = beta-D-fructose 1,6-bisphosphate + ADP + H(+). The enzyme catalyses D-tagatofuranose 6-phosphate + ATP = D-tagatofuranose 1,6-bisphosphate + ADP + H(+). Its pathway is carbohydrate degradation; glycolysis; D-glyceraldehyde 3-phosphate and glycerone phosphate from D-glucose: step 3/4. In terms of biological role, catalyzes the phosphorylation of D-fructose 6-phosphate to fructose 1,6-bisphosphate by ATP, the first committing step of glycolysis. Can also catalyze the phosphorylation of tagatose-6-phosphate. In Mycobacterium tuberculosis (strain CDC 1551 / Oshkosh), this protein is ATP-dependent 6-phosphofructokinase.